A 2752-amino-acid polypeptide reads, in one-letter code: Serine/arginine repetitive matrix protein 2 (2752 aa).

Position 1 is an N-acetylmethionine (Met1). Positions 60-92 (HERKRRVELRCLELEEMMEEQGYEEQQIQEKVA) form a coiled coil. The residue at position 101 (Lys101) is an N6-acetyllysine. Residues Lys108 and Lys130 each participate in a glycyl lysine isopeptide (Lys-Gly) (interchain with G-Cter in SUMO2) cross-link. The interval 141–2131 (ISDSYVDGSS…MSPTPLDRCR (1991 aa)) is disordered. Tyr145 carries the post-translational modification Phosphotyrosine. The residue at position 169 (Lys169) is an N6-acetyllysine. The span at 175–185 (RESSSSRSPTP) shows a compositional bias: low complexity. 2 stretches are compositionally biased toward basic residues: residues 186–197 (KQKKKKKKKDRG) and 207–249 (RERK…KRSR). The tract at residues 197–259 (GRRSESSSPR…STTPAPKSRR (63 aa)) is sufficient for RNA-binding. A phosphoserine mark is found at Ser220 and Ser222. Residues 263 to 290 (STSADSASSSDTSRSRSRSAAAKTHTTA) show a composition bias toward low complexity. Residue Thr286 is modified to Phosphothreonine. Residues Ser295, Ser297, Ser300, Ser322, and Ser323 each carry the phosphoserine modification. A compositionally biased stretch (polar residues) spans 313–333 (PGTTSTQRPSSPETATKQPSS). Basic and acidic residues predominate over residues 335 to 347 (YEDKDKDKKEKSA). Low complexity predominate over residues 348 to 360 (TRPSPSPERSSTG). A phosphoserine mark is found at Ser351, Ser353, Ser357, and Ser358. Phosphothreonine occurs at positions 359 and 367. Position 377 is a phosphoserine (Ser377). Residues 380 to 398 (PLATTPLSQEPVNPPSEAS) are compositionally biased toward polar residues. Phosphothreonine is present on residues Thr383 and Thr384. Phosphoserine occurs at positions 387, 395, 398, 404, and 408. Residues 399-410 (PTRDRSPPKSPE) show a composition bias toward basic and acidic residues. A compositionally biased stretch (low complexity) spans 411 to 421 (KLPQSSSSESS). Residues Ser424, Ser435, Ser436, Ser437, Ser440, and Ser454 each carry the phosphoserine modification. Residues 461 to 483 (NRSHGRAKRDKSHSHTPSRRMGR) are compositionally biased toward basic residues. A phosphoserine mark is found at Ser484, Ser486, Ser506, Ser508, Ser510, Ser534, Ser536, and Ser543. Residues 491–536 (KRGRSRSRTPTKRGHSRSRSPQWRRSRSAQRWGRSRSPQRRGRSRS) show a composition bias toward basic residues. Residues 537 to 546 (PQRPGWSRSR) are compositionally biased toward low complexity. Basic residues-rich tracts occupy residues 547-564 (NTQRRGRSRSARRGRSHS), 571-723 (GRSR…RRGR), and 732-742 (NKSRTSQRRSR). 3 positions are modified to phosphoserine: Ser702, Ser704, and Ser706. A phosphoserine mark is found at Ser778, Ser780, and Ser783. Residues 790 to 805 (SQTPPRRSRSGSSQPK) show a composition bias toward low complexity. The segment covering 806 to 816 (AKSRTPPRRSR) has biased composition (basic residues). A compositionally biased stretch (low complexity) spans 828–841 (KTPSRQSHSSSSPH). Phosphoserine occurs at positions 846 and 854. Polar residues predominate over residues 849–869 (PPRQGSITSPQANEQSVTPQR). Position 856 is a phosphothreonine (Thr856). Phosphoserine occurs at positions 857 and 864. Thr866 carries the post-translational modification Phosphothreonine. Ser871, Ser875, Ser876, Ser908, Ser935, Ser950, Ser952, Ser954, Ser957, Ser968, Ser970, Ser972, Ser973, and Ser974 each carry phosphoserine. Composition is skewed to low complexity over residues 901 to 917 (SSTPPRQSPSRSSSPQP) and 924 to 945 (SPRQRSHSGSSSPSPSRVTSRT). Phosphothreonine is present on residues Thr977 and Thr983. 2 positions are modified to phosphoserine: Ser992 and Ser994. Tyr996 is subject to Phosphotyrosine. At Thr1003 the chain carries Phosphothreonine. Residues 1008-1017 (SLSGSKSPCP) show a composition bias toward low complexity. Phosphoserine is present on residues Ser1010, Ser1014, Ser1024, Ser1028, Ser1032, and Ser1042. The segment covering 1040–1064 (KSSTPPGESYFGVSSLQLKGQSQTS) has biased composition (polar residues). Phosphothreonine is present on Thr1043. Tyr1049 carries the post-translational modification Phosphotyrosine. Phosphoserine is present on residues Ser1064, Ser1069, Ser1072, Ser1073, Ser1083, Ser1099, Ser1101, Ser1102, and Ser1103. Residues 1071–1092 (TSSPEVRQSHSESPSLQSKSQT) are compositionally biased toward polar residues. Over residues 1093–1104 (SPKGGRSRSSSP) the composition is skewed to low complexity. A Phosphothreonine modification is found at Thr1106. Residues Ser1112, Ser1122, Ser1124, Ser1129, Ser1132, Ser1152, Ser1179, Ser1188, and Ser1198 each carry the phosphoserine modification. Residues 1132–1159 (SPEQSRFQSDSSSYPTVDSNSLLGQSRL) are compositionally biased toward polar residues. Basic and acidic residues predominate over residues 1204–1214 (DTLRTPPRERS). Residue Thr1208 is modified to Phosphothreonine. Ser1214, Ser1219, Ser1227, Ser1254, Ser1257, Ser1258, Ser1266, Ser1270, and Ser1271 each carry phosphoserine. Positions 1216 to 1233 (AGSSPETKEQNSALPTSS) are enriched in polar residues. Over residues 1283–1292 (TLDQSQSQAS) the composition is skewed to polar residues. Phosphoserine is present on residues Ser1311, Ser1318, Ser1320, Ser1326, Ser1329, Ser1336, Ser1348, Ser1368, Ser1382, Ser1383, Ser1384, Ser1387, Ser1401, Ser1403, and Ser1404. Positions 1318–1328 (SNSPLRENSFG) are enriched in polar residues. Residues 1376–1386 (TRSSGHSSSEL) are compositionally biased toward polar residues. Residue Thr1413 is modified to Phosphothreonine. Phosphoserine is present on residues Ser1415, Ser1421, Ser1423, and Ser1424. A Phosphothreonine modification is found at Thr1434. Positions 1441-1452 (SGSSPGLRDGSG) are enriched in low complexity. Ser1444 and Ser1451 each carry phosphoserine. Phosphothreonine is present on Thr1453. The segment covering 1453–1463 (TPSRHSLSGSS) has biased composition (polar residues). Ser1458, Ser1460, Ser1462, and Ser1463 each carry phosphoserine. Thr1472 is modified (phosphothreonine). Phosphoserine is present on residues Ser1482 and Ser1483. Thr1492 is modified (phosphothreonine). Ser1497, Ser1499, Ser1501, and Ser1502 each carry phosphoserine. Thr1511 is modified (phosphothreonine). 4 positions are modified to phosphoserine: Ser1517, Ser1519, Ser1521, and Ser1522. At Thr1531 the chain carries Phosphothreonine. A compositionally biased stretch (polar residues) spans 1534–1544 (GQRSRSGSSQE). Ser1537, Ser1539, Ser1541, Ser1542, and Ser1552 each carry phosphoserine. Positions 1555 to 1567 (ERSESDSSPDSKA) are enriched in basic and acidic residues. Residues 1568–1577 (KTRTPLRQRS) are compositionally biased toward basic residues. Ser1577, Ser1579, Ser1581, Ser1582, Ser1598, Ser1600, Ser1601, Ser1616, Ser1620, Ser1621, Ser1648, Ser1658, Ser1691, Ser1693, and Ser1694 each carry phosphoserine. Over residues 1638 to 1657 (SGSSSKGRGPSPEGSSSTES) the composition is skewed to low complexity. The span at 1681–1691 (KSRTPPRRRSS) shows a compositional bias: basic residues. Thr1698 carries the post-translational modification Phosphothreonine. 6 positions are modified to phosphoserine: Ser1727, Ser1729, Ser1731, Ser1732, Ser1762, and Ser1764. Basic residues-rich tracts occupy residues 1769–1789 (GLQRSRSRSRREKTRTTRRRD) and 1798–1816 (SRRRQRSRSRSRVTRRRRG). 6 positions are modified to phosphoserine: Ser1818, Ser1822, Ser1854, Ser1857, Ser1876, and Ser1878. Residues 1834 to 1854 (SSRRRRGRSRTPPTSRKRSRS) are compositionally biased toward basic residues. Basic residues predominate over residues 1862-2068 (KRSRSRASPA…PRTARGKRSL (207 aa)). At Thr1880 the chain carries Phosphothreonine. A phosphoserine mark is found at Ser1884 and Ser1890. At Thr1892 the chain carries Phosphothreonine. 5 positions are modified to phosphoserine: Ser1893, Ser1916, Ser1919, Ser1923, and Ser1925. Phosphothreonine is present on residues Thr1927 and Thr1931. Residues Ser1946 and Ser1948 each carry the phosphoserine modification. 2 positions are modified to phosphothreonine: Thr1950 and Thr1954. A phosphoserine mark is found at Ser1958 and Ser1960. Phosphothreonine occurs at positions 1962 and 1966. Phosphoserine occurs at positions 1970, 1972, and 1975. The residue at position 1978 (Thr1978) is a Phosphothreonine. Phosphoserine occurs at positions 1984, 1987, 1996, 1999, 2008, 2011, 2018, and 2020. Thr2022 bears the Phosphothreonine mark. A phosphoserine mark is found at Ser2030 and Ser2032. Residue Thr2034 is modified to Phosphothreonine. 4 positions are modified to phosphoserine: Ser2042, Ser2044, Ser2046, and Ser2067. Phosphothreonine is present on Thr2069. Positions 2070–2095 (RSPPAIRRRSASGSSSDRSRSATPPA) are enriched in low complexity. Phosphoserine is present on residues Ser2071 and Ser2090. Thr2092 carries the post-translational modification Phosphothreonine. Polar residues predominate over residues 2097–2124 (RNHSGSRTPPVALNSSRMSCFSRPSMSP). 2 positions are modified to phosphoserine: Ser2100 and Ser2102. Residue Thr2104 is modified to Phosphothreonine. Residues Ser2118, Ser2121, Ser2123, and Ser2132 each carry the phosphoserine modification. Thr2144 is subject to Phosphothreonine. Omega-N-methylarginine is present on residues Arg2194, Arg2207, Arg2231, and Arg2246. A Phosphoserine modification is found at Ser2272. Omega-N-methylarginine occurs at positions 2274 and 2288. A phosphothreonine mark is found at Thr2289, Thr2291, and Thr2302. Position 2310 is a phosphoserine (Ser2310). The tract at residues 2311–2342 (LTGSGTPPTAANYPSSSRTPQAPASANLVGPR) is disordered. 2 positions are modified to phosphothreonine: Thr2316 and Thr2329. The span at 2317–2334 (PPTAANYPSSSRTPQAPA) shows a compositional bias: polar residues. The residue at position 2335 (Ser2335) is a Phosphoserine. At Arg2342 the chain carries Omega-N-methylarginine. Residues Ser2343, Ser2368, and Ser2376 each carry the phosphoserine modification. Thr2381 is subject to Phosphothreonine. At Ser2382 the chain carries Phosphoserine. An Asymmetric dimethylarginine; alternate modification is found at Arg2384. Residue Arg2384 is modified to Omega-N-methylarginine; alternate. Residues 2389 to 2752 (AYERVSGRTS…PMRHRSSRSP (364 aa)) are disordered. 3 positions are modified to phosphoserine: Ser2394, Ser2398, and Ser2407. Thr2409 bears the Phosphothreonine mark. Ser2412, Ser2415, Ser2426, Ser2429, Ser2449, and Ser2453 each carry phosphoserine. Positions 2426–2439 (SPSSRMGQAPSQSL) are enriched in polar residues. A compositionally biased stretch (polar residues) spans 2455–2473 (FSDQSRCLIAQTTPVAGSQ). Composition is skewed to low complexity over residues 2474-2487 (SLSSGAVATTTSSA), 2515-2526 (AQQPSALAALQP), and 2533-2567 (SSSSSSSSSSSSSSSSSSSSSSSSGSSSSDSEGSS). Residue Ser2581 is modified to Phosphoserine. The residue at position 2583 (Thr2583) is a Phosphothreonine. Residue Lys2587 forms a Glycyl lysine isopeptide (Lys-Gly) (interchain with G-Cter in SUMO2) linkage. Thr2599 bears the Phosphothreonine mark. The span at 2608–2648 (SSSSSSSSSSSSSSSSSSSSSSSSSSSSSSSSSSSSSSSSS) shows a compositional bias: low complexity. A compositionally biased stretch (pro residues) spans 2651-2668 (PAKPGPQALPKPASPKKP). Phosphoserine occurs at positions 2664, 2675, 2677, 2684, 2688, 2690, 2692, 2694, 2702, and 2706. Positions 2669–2689 (PPGERRSRSPRKPIDSLRDSR) are enriched in basic and acidic residues. Low complexity predominate over residues 2707–2716 (PRDQQSSSSE). Basic and acidic residues predominate over residues 2717–2729 (RGSRRGQRGDSRS). Thr2738 is modified (phosphothreonine). A Phosphoserine modification is found at Ser2740. Basic residues predominate over residues 2743-2752 (PMRHRSSRSP).

Belongs to the CWC21 family. Component of pre-catalytic, catalytic and post-catalytic spliceosome complexes. Found in a pre-mRNA splicing complex with SFRS4, SFRS5, SNRP70, SNRPA1, SRRM1 and SRRM2. Component of the minor spliceosome, which splices U12-type introns. Interacts with DHX8. Interacts with CACTIN. As to expression, expressed in liver, placenta, and white blood cells.

The protein resides in the nucleus. It is found in the nucleus speckle. Required for pre-mRNA splicing as component of the spliceosome. As a component of the minor spliceosome, involved in the splicing of U12-type introns in pre-mRNAs. This chain is Serine/arginine repetitive matrix protein 2 (SRRM2), found in Homo sapiens (Human).